We begin with the raw amino-acid sequence, 517 residues long: Cytochrome P450 monooxygenase ausI (517 aa).

Residues 8-28 (LAPLGQPWIAGLVVVSAVLYL) form a helical membrane-spanning segment. Residue Cys457 coordinates heme.

The protein belongs to the cytochrome P450 family. The cofactor is heme.

It is found in the membrane. It participates in secondary metabolite biosynthesis; terpenoid biosynthesis. In terms of biological role, cytochrome P450 monooxygenase; part of the gene cluster that mediates the biosynthesis of calidodehydroaustin, a fungal meroterpenoid. The first step of the pathway is the synthesis of 3,5-dimethylorsellinic acid by the polyketide synthase ausA. 3,5-dimethylorsellinic acid is then prenylated by the polyprenyl transferase ausN. Further epoxidation by the FAD-dependent monooxygenase ausM and cyclization by the probable terpene cyclase ausL lead to the formation of protoaustinoid A. Protoaustinoid A is then oxidized to spiro-lactone preaustinoid A3 by the combined action of the FAD-binding monooxygenases ausB and ausC, and the dioxygenase ausE. Acid-catalyzed keto-rearrangement and ring contraction of the tetraketide portion of preaustinoid A3 by ausJ lead to the formation of preaustinoid A4. The aldo-keto reductase ausK, with the help of ausH, is involved in the next step by transforming preaustinoid A4 into isoaustinone which is in turn hydroxylated by the P450 monooxygenase ausI to form austinolide. The cytochrome P450 monooxygenase ausG modifies austinolide to austinol. Austinol is further acetylated to austin by the O-acetyltransferase ausP, which spontaneously changes to dehydroaustin. The cytochrome P450 monooxygenase ausR then converts dehydroaustin is into 7-dehydrodehydroaustin. The hydroxylation catalyzed by ausR permits the O-acetyltransferase ausQ to add an additional acetyl group to the molecule, leading to the formation of acetoxydehydroaustin. The short chain dehydrogenase ausT catalyzes the reduction of the double bond present between carbon atoms 1 and 2 to convert 7-dehydrodehydroaustin into 1,2-dihydro-7-hydroxydehydroaustin. AusQ catalyzes not only an acetylation reaction but also the addition of the PKS ausV diketide product to 1,2-dihydro-7-hydroxydehydroaustin, forming precalidodehydroaustin. Finally, the iron/alpha-ketoglutarate-dependent dioxygenase converts precalidodehydroaustin into calidodehydroaustin. The protein is Cytochrome P450 monooxygenase ausI of Aspergillus calidoustus.